A 57-amino-acid polypeptide reads, in one-letter code: Catalase-1 (57 aa).

Y37 serves as a coordination point for heme.

Homodimer. Requires heme as cofactor.

The catalysed reaction is 2 H2O2 = O2 + 2 H2O. Its function is as follows. Decomposes hydrogen peroxide into water and oxygen; serves to protect cells from the toxic effects of hydrogen peroxide. The polypeptide is Catalase-1 (Comamonas terrigena).